The sequence spans 251 residues: tRNA pseudouridine synthase A (251 aa).

The active-site Nucleophile is Asp52. Substrate is bound at residue Tyr113.

The protein belongs to the tRNA pseudouridine synthase TruA family. In terms of assembly, homodimer.

The catalysed reaction is uridine(38/39/40) in tRNA = pseudouridine(38/39/40) in tRNA. In terms of biological role, formation of pseudouridine at positions 38, 39 and 40 in the anticodon stem and loop of transfer RNAs. This Brucella anthropi (strain ATCC 49188 / DSM 6882 / CCUG 24695 / JCM 21032 / LMG 3331 / NBRC 15819 / NCTC 12168 / Alc 37) (Ochrobactrum anthropi) protein is tRNA pseudouridine synthase A.